The sequence spans 89 residues: Large ribosomal subunit protein bL27 (89 aa).

The protein belongs to the bacterial ribosomal protein bL27 family.

The sequence is that of Large ribosomal subunit protein bL27 from Cereibacter sphaeroides (strain ATCC 17029 / ATH 2.4.9) (Rhodobacter sphaeroides).